We begin with the raw amino-acid sequence, 73 residues long: Long neurotoxin 3 (73 aa).

5 cysteine pairs are disulfide-bonded: Cys3–Cys21, Cys14–Cys42, Cys27–Cys31, Cys46–Cys57, and Cys58–Cys63.

It belongs to the three-finger toxin family. Long-chain subfamily. Type II alpha-neurotoxin sub-subfamily. Expressed by the venom gland.

Its subcellular location is the secreted. Binds with high affinity to muscular (alpha-1/CHRNA1) and neuronal (alpha-7/CHRNA7) nicotinic acetylcholine receptor (nAChR) and inhibits acetylcholine from binding to the receptor, thereby impairing neuromuscular and neuronal transmission. The sequence is that of Long neurotoxin 3 from Ophiophagus hannah (King cobra).